The primary structure comprises 94 residues: Putative pterin-4-alpha-carbinolamine dehydratase (94 aa).

Belongs to the pterin-4-alpha-carbinolamine dehydratase family.

It catalyses the reaction (4aS,6R)-4a-hydroxy-L-erythro-5,6,7,8-tetrahydrobiopterin = (6R)-L-erythro-6,7-dihydrobiopterin + H2O. The sequence is that of Putative pterin-4-alpha-carbinolamine dehydratase from Caulobacter vibrioides (strain ATCC 19089 / CIP 103742 / CB 15) (Caulobacter crescentus).